The sequence spans 399 residues: C-type lectin domain family 4 member M (399 aa).

Residues Met1 to Gly49 are Cytoplasmic-facing. The short motif at Leu14–Leu15 is the Endocytosis signal element. The helical; Signal-anchor for type II membrane protein transmembrane segment at Pro50–Val70 threads the bilayer. At Gln71–Glu399 the chain is on the extracellular side. Asn92 carries an N-linked (GlcNAc...) asparagine glycan. 7 consecutive repeat copies span residues Lys108–Ser130, Arg131–Ser153, Arg154–Ser176, Lys177–Ser199, Lys200–Ser222, Lys223–Ser245, and Lys246–Cys268. The tract at residues Lys108–Pro269 is 7 X approximate tandem repeats. Cystine bridges form between Cys265–Cys395, Cys268–Cys279, Cys296–Cys389, and Cys368–Cys381. The 117-residue stretch at Phe274–Lys390 folds into the C-type lectin domain. Glu359, Asn361, Ser363, Glu366, Asn377, and Asp378 together coordinate Ca(2+). An N-linked (GlcNAc...) asparagine glycan is attached at Asn361.

In terms of assembly, homotetramer.

The protein resides in the membrane. Its function is as follows. Probable pathogen-recognition receptor involved in peripheral immune surveillance in liver. May mediate the endocytosis of pathogens which are subsequently degraded in lysosomal compartments. Probably recognizes in a calcium-dependent manner high mannose N-linked oligosaccharides in a variety of pathogen antigens. Is a receptor for ICAM3, probably by binding to mannose-like carbohydrates. This is C-type lectin domain family 4 member M (CLEC4M) from Nomascus concolor (Black crested gibbon).